A 256-amino-acid polypeptide reads, in one-letter code: Small ribosomal subunit protein eS1 (256 aa).

Residues M1–K18 show a composition bias toward basic residues. The segment at M1–V21 is disordered. An N-acetylalanine; partial modification is found at A2.

The protein belongs to the eukaryotic ribosomal protein eS1 family. As to quaternary structure, component of the small ribosomal subunit. Mature ribosomes consist of a small (40S) and a large (60S) subunit. The 40S subunit contains about 33 different proteins and 1 molecule of RNA (18S). The 60S subunit contains about 49 different proteins and 3 molecules of RNA (25S, 5.8S and 5S).

The protein localises to the cytoplasm. The sequence is that of Small ribosomal subunit protein eS1 (rps1) from Aspergillus niger (strain ATCC MYA-4892 / CBS 513.88 / FGSC A1513).